Consider the following 392-residue polypeptide: Alkaline phosphatase L (392 aa).

Positions 1 to 23 are cleaved as a signal peptide; the sequence is MYKRSLIAASLSVAALVSAQAMA.

This sequence belongs to the PstS family. As to quaternary structure, homodimer.

Its subcellular location is the secreted. The protein resides in the periplasm. It catalyses the reaction a phosphate monoester + H2O = an alcohol + phosphate. Its function is as follows. Has both a phosphomonoesterase and phosphodiesterase activity. This is Alkaline phosphatase L from Pseudomonas aeruginosa (strain UCBPP-PA14).